The following is a 235-amino-acid chain: Small ribosomal subunit protein uS2c (235 aa).

It belongs to the universal ribosomal protein uS2 family.

Its subcellular location is the plastid. The protein resides in the chloroplast. The protein is Small ribosomal subunit protein uS2c (rps2) of Zygnema circumcarinatum (Green alga).